A 341-amino-acid chain; its full sequence is Protein CbhE (341 aa).

Positions 287 to 297 are enriched in acidic residues; that stretch reads IDEENTSDSSE. Residues 287-341 are disordered; it reads IDEENTSDSSEEGTSKNRFRDTLFSNVPDSSSDSENEQEREKKELAGKTPSFRLC. Over residues 323–332 the composition is skewed to basic and acidic residues; it reads EQEREKKELA.

The protein resides in the cytoplasm. Its function is as follows. May be involved in the pathogenesis of acute Q fever. The protein is Protein CbhE (cbhE) of Coxiella burnetii (strain RSA 493 / Nine Mile phase I).